Here is a 201-residue protein sequence, read N- to C-terminus: MVSSGYPPIMNDLIRRLSKLPGLGEKSATRIAMHLLKMSRTDAESLADAIRELRSRIRTCSRCFHFTDAEECSICADPARDTGEICVVETTADLLAIEQSGAYRGRYHVLQGVLAPLDAVGPDDLRIRELLERIDREGAREVIIATNPSSEGEATAHYLLKLLKDRNVRVSRIAYGIPMGGDLKYTDRFTLERALKGRQAF.

The C4-type zinc finger occupies 60 to 75 (CSRCFHFTDAEECSIC). Positions 83–178 (GEICVVETTA…RVSRIAYGIP (96 aa)) constitute a Toprim domain.

The protein belongs to the RecR family.

May play a role in DNA repair. It seems to be involved in an RecBC-independent recombinational process of DNA repair. It may act with RecF and RecO. The sequence is that of Recombination protein RecR from Syntrophobacter fumaroxidans (strain DSM 10017 / MPOB).